The sequence spans 309 residues: Acetylglutamate kinase (309 aa).

Residues 82–83, Arg104, and Asn206 each bind substrate; that span reads GG.

Belongs to the acetylglutamate kinase family. ArgB subfamily.

It localises to the cytoplasm. It catalyses the reaction N-acetyl-L-glutamate + ATP = N-acetyl-L-glutamyl 5-phosphate + ADP. It participates in amino-acid biosynthesis; L-arginine biosynthesis; N(2)-acetyl-L-ornithine from L-glutamate: step 2/4. Catalyzes the ATP-dependent phosphorylation of N-acetyl-L-glutamate. This chain is Acetylglutamate kinase, found in Cupriavidus pinatubonensis (strain JMP 134 / LMG 1197) (Cupriavidus necator (strain JMP 134)).